A 296-amino-acid chain; its full sequence is tRNA (guanine-N(7)-)-methyltransferase (296 aa).

Residues 1–26 (MSKRTREESEMEAGPSTASPGVSVSP) are disordered. S-adenosyl-L-methionine contacts are provided by residues glycine 101, 124 to 125 (EI), 168 to 169 (NS), and leucine 188. Residue aspartate 191 is part of the active site. Position 266–268 (266–268 (TEE)) interacts with S-adenosyl-L-methionine.

This sequence belongs to the class I-like SAM-binding methyltransferase superfamily. TrmB family. In terms of assembly, forms a complex with TRM82.

The protein localises to the nucleus. The enzyme catalyses guanosine(46) in tRNA + S-adenosyl-L-methionine = N(7)-methylguanosine(46) in tRNA + S-adenosyl-L-homocysteine. The protein operates within tRNA modification; N(7)-methylguanine-tRNA biosynthesis. Functionally, catalyzes the formation of N(7)-methylguanine at position 46 (m7G46) in tRNA. The sequence is that of tRNA (guanine-N(7)-)-methyltransferase from Cryptococcus neoformans var. neoformans serotype D (strain JEC21 / ATCC MYA-565) (Filobasidiella neoformans).